The sequence spans 186 residues: Elongation factor P (186 aa).

Belongs to the elongation factor P family.

The protein localises to the cytoplasm. It participates in protein biosynthesis; polypeptide chain elongation. Involved in peptide bond synthesis. Stimulates efficient translation and peptide-bond synthesis on native or reconstituted 70S ribosomes in vitro. Probably functions indirectly by altering the affinity of the ribosome for aminoacyl-tRNA, thus increasing their reactivity as acceptors for peptidyl transferase. The protein is Elongation factor P of Streptococcus agalactiae serotype Ia (strain ATCC 27591 / A909 / CDC SS700).